A 238-amino-acid chain; its full sequence is Probable transcriptional regulatory protein CTA_0499 (238 aa).

Residues 1 to 21 (MAGHSKWANTKHRKERADHKK) form a disordered region. The span at 9–21 (NTKHRKERADHKK) shows a compositional bias: basic residues.

This sequence belongs to the TACO1 family.

Its subcellular location is the cytoplasm. This chain is Probable transcriptional regulatory protein CTA_0499, found in Chlamydia trachomatis serovar A (strain ATCC VR-571B / DSM 19440 / HAR-13).